The sequence spans 275 residues: UDP-Gal:alpha-D-GlcNAc-diphosphoundecaprenol beta-1,3-galactosyltransferase (275 aa).

The protein belongs to the glycosyltransferase 2 family. It depends on Mn(2+) as a cofactor.

It localises to the cell inner membrane. It catalyses the reaction N-acetyl-alpha-D-glucosaminyl-di-trans,octa-cis-undecaprenyl diphosphate + UDP-alpha-D-galactose = beta-D-Gal-(1-&gt;3)-alpha-D-GlcNAc-di-trans,octa-cis-undecaprenyl diphosphate + UDP + H(+). The protein operates within bacterial outer membrane biogenesis; LPS O-antigen biosynthesis. In terms of biological role, catalyzes the addition of Gal, the second sugar moiety of the O7-antigen repeating unit, to GlcNAc-pyrophosphate-undecaprenol. The sequence is that of UDP-Gal:alpha-D-GlcNAc-diphosphoundecaprenol beta-1,3-galactosyltransferase (wbbD) from Escherichia coli.